We begin with the raw amino-acid sequence, 453 residues long: Magnesium transporter MgtE (453 aa).

Residues 1-286 lie on the Cytoplasmic side of the membrane; sequence MNEGQEMEEQ…ENPLKAASKR (286 aa). 11 residues coordinate Mg(2+): Glu-71, Asp-98, Asp-102, Glu-136, Ala-140, Tyr-176, Arg-227, Asp-230, Ala-233, Asp-251, and Glu-259. CBS domains follow at residues 142-205 and 206-262; these read MTTE…IADI and LNER…EAAS. Residues 287-307 form a helical membrane-spanning segment; it reads LPWLITLLFLGMSTASLISNY. A topological domain (extracellular) is located at residue Glu-308. A helical membrane pass occupies residues 309–329; sequence SLVSEASILAVFISLITGTAG. The Cytoplasmic segment spans residues 330 to 360; the sequence is NAGTQSLAVAVRRLAMKDEKDSNFGRLILSE. The chain crosses the membrane as a helical span at residues 361-381; that stretch reads VLTGLVTGAVTGLTIMIVVGV. Residues 382 to 389 are Extracellular-facing; that stretch reads WQHNLPLG. Residues 390 to 410 traverse the membrane as a helical segment; it reads FVIGMAMLCAITVANLAGSLI. The Cytoplasmic portion of the chain corresponds to 411–427; sequence PMLMDKLGFDPAVASGP. The helical transmembrane segment at 428-448 threads the bilayer; sequence FITTLSDLTSVLIYFNIASMF. Asp-434 serves as a coordination point for Mg(2+). At 449–453 the chain is on the extracellular side; sequence MRYFV.

This sequence belongs to the SLC41A transporter family. As to quaternary structure, homodimer.

Its subcellular location is the cell membrane. It catalyses the reaction Mg(2+)(in) = Mg(2+)(out). Functionally, acts as a magnesium transporter. The protein is Magnesium transporter MgtE of Enterococcus faecalis (strain ATCC 700802 / V583).